The sequence spans 218 residues: uncharacterized protein (218 aa).

7 helical membrane passes run 9 to 29 (LLVIVGIDLILGGDNAVVIAM), 42 to 62 (AIILGTFIAVAMRIGLTSAAV), 67 to 87 (IPFLQCAGGIFLLYLGYQLLI), 107 to 127 (TIVLADLFMSLDNVIAVAGAS), 134 to 154 (VVIGLCVSVPVIIWGSKLIHI), 159 to 179 (IPLLIYAGSGLLAYTGGEMIV), and 192 to 212 (GTVETLLPILTVAFVILASIY).

The protein belongs to the TerC family.

Its subcellular location is the cell membrane. This is an uncharacterized protein from Bacillus subtilis (strain 168).